Consider the following 483-residue polypeptide: MSYTIEGATGAWELVIGLEVHAQVISQSKLFSGAATAFGAEPNSQVSLVDAALPGMLPVLNRECVAQAVRTGLGLKAHINPVSRFDRKNYFYADLPQGYQISQFAHPIVGSGTIEIELQDGSTRQIGVTRLHLEQDAGKSLHDQDPTRSFIDLNRSGVALMEIVSEPDMRSPEEAGAYLRKLRTILRYLGTCDGNMEEGSMRADVNVSVRRAGEPFRTRCEIKNVNSIRYVMQAIEAEAKRQIAIWEEGEEVDQETRLFDPSRGETRSMRSKEDAHDYRYFPDPDLLPLVLDEDWIEGLKASLPELPDEKSARFVSEYGLTRYDAGVLVAEQASAHFFETVAKGRDARLAANYITGDLFAVLNRTGRSITDSPISAEALGGLLDLLADNTINGRIAKEVFEAMAETGEHPADIVEARGLRQVTDTGAIDTAVAQVLEANPDKLAEYRSGKDKLFGFFVGQVMKAMQGKGNPALVNEALKKALG.

Belongs to the GatB/GatE family. GatB subfamily. As to quaternary structure, heterotrimer of A, B and C subunits.

The catalysed reaction is L-glutamyl-tRNA(Gln) + L-glutamine + ATP + H2O = L-glutaminyl-tRNA(Gln) + L-glutamate + ADP + phosphate + H(+). It catalyses the reaction L-aspartyl-tRNA(Asn) + L-glutamine + ATP + H2O = L-asparaginyl-tRNA(Asn) + L-glutamate + ADP + phosphate + 2 H(+). Its function is as follows. Allows the formation of correctly charged Asn-tRNA(Asn) or Gln-tRNA(Gln) through the transamidation of misacylated Asp-tRNA(Asn) or Glu-tRNA(Gln) in organisms which lack either or both of asparaginyl-tRNA or glutaminyl-tRNA synthetases. The reaction takes place in the presence of glutamine and ATP through an activated phospho-Asp-tRNA(Asn) or phospho-Glu-tRNA(Gln). This chain is Aspartyl/glutamyl-tRNA(Asn/Gln) amidotransferase subunit B, found in Granulibacter bethesdensis (strain ATCC BAA-1260 / CGDNIH1).